The chain runs to 140 residues: ATP synthase epsilon chain (140 aa).

It belongs to the ATPase epsilon chain family. In terms of assembly, F-type ATPases have 2 components, CF(1) - the catalytic core - and CF(0) - the membrane proton channel. CF(1) has five subunits: alpha(3), beta(3), gamma(1), delta(1), epsilon(1). CF(0) has three main subunits: a, b and c.

It is found in the cell membrane. In terms of biological role, produces ATP from ADP in the presence of a proton gradient across the membrane. The polypeptide is ATP synthase epsilon chain (Dehalococcoides mccartyi (strain ATCC BAA-2100 / JCM 16839 / KCTC 5957 / BAV1)).